Consider the following 152-residue polypeptide: Ribosome maturation factor RimP (152 aa).

This sequence belongs to the RimP family.

It is found in the cytoplasm. Its function is as follows. Required for maturation of 30S ribosomal subunits. The polypeptide is Ribosome maturation factor RimP (Serratia proteamaculans (strain 568)).